Reading from the N-terminus, the 244-residue chain is Transcriptional regulatory protein YpdB (244 aa).

Residues lysine 2 to glutamate 116 form the Response regulatory domain. Aspartate 53 bears the 4-aspartylphosphate mark. Residues isoleucine 139–leucine 244 enclose the HTH LytTR-type domain.

Phosphorylated by YpdA.

The protein localises to the cytoplasm. Its function is as follows. Member of the two-component regulatory system YpdA/YpdB. YpdB regulates expression of yhjX by binding to its promoter region. The polypeptide is Transcriptional regulatory protein YpdB (ypdB) (Escherichia coli O157:H7).